Here is a 312-residue protein sequence, read N- to C-terminus: Glyoxylate/hydroxypyruvate reductase A (312 aa).

R227 is a catalytic residue. H275 (proton donor) is an active-site residue.

This sequence belongs to the D-isomer specific 2-hydroxyacid dehydrogenase family. GhrA subfamily.

It is found in the cytoplasm. It carries out the reaction glycolate + NADP(+) = glyoxylate + NADPH + H(+). The enzyme catalyses (R)-glycerate + NAD(+) = 3-hydroxypyruvate + NADH + H(+). The catalysed reaction is (R)-glycerate + NADP(+) = 3-hydroxypyruvate + NADPH + H(+). Catalyzes the NADPH-dependent reduction of glyoxylate and hydroxypyruvate into glycolate and glycerate, respectively. In Salmonella paratyphi B (strain ATCC BAA-1250 / SPB7), this protein is Glyoxylate/hydroxypyruvate reductase A.